We begin with the raw amino-acid sequence, 429 residues long: Glutamyl-tRNA reductase (429 aa).

Residues 56–59, Ser119, 124–126, and Gln130 contribute to the substrate site; these read TCNR and EPQ. Cys57 acts as the Nucleophile in catalysis. 199–204 contacts NADP(+); it reads GAGEMI.

It belongs to the glutamyl-tRNA reductase family. Homodimer.

It carries out the reaction (S)-4-amino-5-oxopentanoate + tRNA(Glu) + NADP(+) = L-glutamyl-tRNA(Glu) + NADPH + H(+). The protein operates within porphyrin-containing compound metabolism; protoporphyrin-IX biosynthesis; 5-aminolevulinate from L-glutamyl-tRNA(Glu): step 1/2. In terms of biological role, catalyzes the NADPH-dependent reduction of glutamyl-tRNA(Glu) to glutamate 1-semialdehyde (GSA). The protein is Glutamyl-tRNA reductase of Janthinobacterium sp. (strain Marseille) (Minibacterium massiliensis).